The sequence spans 214 residues: Large ribosomal subunit protein uL16-like (214 aa).

This sequence belongs to the universal ribosomal protein uL16 family. In terms of assembly, component of the 60S large ribosomal subunit (LSU).

The protein localises to the cytoplasm. In terms of biological role, testis-specific component of the ribosome, which is required for the transition from prophase to metaphase in male meiosis I. Compensates for the inactivated X-linked RPL10 paralog during spermatogenesis. The ribosome is a large ribonucleoprotein complex responsible for the synthesis of proteins in the cell. The small ribosomal subunit (SSU) binds messenger RNAs (mRNAs) and translates the encoded message by selecting cognate aminoacyl-transfer RNA (tRNA) molecules. The large subunit (LSU) contains the ribosomal catalytic site termed the peptidyl transferase center (PTC), which catalyzes the formation of peptide bonds, thereby polymerizing the amino acids delivered by tRNAs into a polypeptide chain. The nascent polypeptides leave the ribosome through a tunnel in the LSU and interact with protein factors that function in enzymatic processing, targeting, and the membrane insertion of nascent chains at the exit of the ribosomal tunnel. The polypeptide is Large ribosomal subunit protein uL16-like (RPL10L) (Macaca fascicularis (Crab-eating macaque)).